The following is a 1840-amino-acid chain: Sodium channel protein type 4 subunit alpha (1840 aa).

Topologically, residues 1–131 are cytoplasmic; it reads MASSSLPNLV…RVAIKVLIHA (131 aa). Over residues 36-60 the composition is skewed to basic and acidic residues; it reads EARLQRNKQMEIEEPERKPRSDLEA. The tract at residues 36-63 is disordered; sequence EARLQRNKQMEIEEPERKPRSDLEAGKN. The stretch at 113–448 is one I repeat; that stretch reads LLSPFSIVRR…VVAMAYAEQN (336 aa). A helical transmembrane segment spans residues 132–150; that stretch reads LFSMFIMITILTNCVFMTM. The Extracellular segment spans residues 151–157; that stretch reads SNPPSWS. A helical transmembrane segment spans residues 158-178; it reads KHVEYTFTGIYTFESLIKMLA. Topologically, residues 179-192 are cytoplasmic; it reads RGFCIDDFTFLRDP. Residues 193–210 traverse the membrane as a helical segment; that stretch reads WNWLDFSVITMAYVTEFV. The Extracellular segment spans residues 211 to 216; it reads DLGNIS. A helical membrane pass occupies residues 217 to 233; it reads ALRTFRVLRALKTITVI. Over 234 to 252 the chain is Cytoplasmic; sequence PGLKTIVGALIQSVKKLSD. The chain crosses the membrane as a helical span at residues 253-272; it reads VMILTVFCLSVFALVGLQLF. Residues 273–385 are Extracellular-facing; that stretch reads MGNLRQKCVR…PNYGYTSYDT (113 aa). Cys280 and Cys354 are disulfide-bonded. Residues Asn288, Asn291, Asn297, Asn303, Asn309, Asn315, Asn327, and Asn356 are each glycosylated (N-linked (GlcNAc...) asparagine). Residues Cys363 and Cys369 are joined by a disulfide bond. The segment at residues 386–410 is an intramembrane region (pore-forming); the sequence is FSWAFLALFRLMTQDYWENLFQLTL. The Extracellular portion of the chain corresponds to 411–417; it reads RAAGKTY. A helical transmembrane segment spans residues 418 to 438; it reads MIFFVVIIFLGSFYLINLILA. Topologically, residues 439-572 are cytoplasmic; it reads VVAMAYAEQN…HIIYLIVMDP (134 aa). The segment at 481–522 is disordered; it reads AAQALESGEEADGDPTHNKDCNGSLDASGEKGPPRPSCSADS. Ser487 bears the Phosphoserine mark. The II repeat unit spans residues 554–826; it reads CCAPWVKFKH…QIAIGRIKWG (273 aa). A helical transmembrane segment spans residues 573-591; that stretch reads FVDLGITICIVLNTLFMAM. Residues 592-602 lie on the Extracellular side of the membrane; sequence EHYPMTEHFDN. The helical transmembrane segment at 603–622 threads the bilayer; that stretch reads VLSVGNLVFTGIFTAEMVLK. Residues 623–636 are Cytoplasmic-facing; that stretch reads LIAMDPYEYFQQGW. Residues 637–656 form a helical membrane-spanning segment; the sequence is NIFDSFIVTLSLVELGLANV. Over 657–658 the chain is Extracellular; the sequence is QG. Residues 659 to 676 form a helical membrane-spanning segment; sequence LSVLRSFRLLRVFKLAKS. The Cytoplasmic portion of the chain corresponds to 677–692; it reads WPTLNMLIKIIGNSVG. Residues 693-711 traverse the membrane as a helical segment; that stretch reads ALGNLTLVLAIIVFIFAVV. Topologically, residues 712-740 are extracellular; sequence GMQLFGKSYKECVCKIASDCNLPRWHMND. A disulfide bridge connects residues Cys725 and Cys731. Positions 741-761 form an intramembrane region, pore-forming; the sequence is FFHSFLIVFRILCGEWIETMW. The Extracellular segment spans residues 762-772; it reads DCMEVAGQAMC. A disulfide bridge links Cys763 with Cys772. Residues 773 to 791 form a helical membrane-spanning segment; the sequence is LTVFLMVMVIGNLVVLNLF. Topologically, residues 792–1025 are cytoplasmic; the sequence is LALLLSSFSA…ACFKIVEHNW (234 aa). Disordered regions lie at residues 854–884 and 925–983; these read EPGG…LKDN and DLEM…GEQP. The segment covering 868–884 has biased composition (basic and acidic residues); that stretch reads EDEKKEPPPEDKELKDN. 2 stretches are compositionally biased toward acidic residues: residues 925-940 and 968-983; these read DLEM…FSEP and EDPE…GEQP. An III repeat occupies 1006 to 1319; the sequence is RGKMWWTLRR…KKYYNAMKKL (314 aa). The chain crosses the membrane as a helical span at residues 1026–1043; it reads FETFIVFMILLSSGALAF. At 1044–1056 the chain is on the extracellular side; sequence EDIYIEQRRVIRT. A helical membrane pass occupies residues 1057 to 1075; the sequence is ILEYADKVFTYIFILEMLL. The Cytoplasmic segment spans residues 1076 to 1089; sequence KWVAYGFKVYFTNA. A helical membrane pass occupies residues 1090 to 1108; the sequence is WCWLDFLIVDVSIISLVAN. At 1109–1116 the chain is on the extracellular side; the sequence is WLGYSELG. Residues 1117–1135 traverse the membrane as a helical segment; it reads PIKSLRTLRALRPLRALSR. Residues 1136–1152 are Cytoplasmic-facing; it reads FEGMRVVVNALLGAIPS. A helical transmembrane segment spans residues 1153–1172; it reads IMNVLLVCLIFWLIFSIMGV. Residues 1173–1223 lie on the Extracellular side of the membrane; the sequence is NLFAGKFYYCVNTTTSERFDISVVNNKSESESLMYTGQVRWMNVKVNYDNV. A glycan (N-linked (GlcNAc...) asparagine) is linked at Asn1198. Residues 1224–1245 constitute an intramembrane region (pore-forming); the sequence is GLGYLSLLQVATFKGWMDIMYA. Residues 1246-1262 are Extracellular-facing; that stretch reads AVDSREKEEQPHYEVNL. The chain crosses the membrane as a helical span at residues 1263-1284; that stretch reads YMYLYFVIFIIFGSFFTLNLFI. The Cytoplasmic portion of the chain corresponds to 1285 to 1347; it reads GVIIDNFNQQ…MVYDFVTKQV (63 aa). The interval 1303 to 1305 is important for rapid channel inactivation; that stretch reads IFM. Residues 1328 to 1626 form an IV repeat; that stretch reads IPRPQNKIQG…WEKFDPDATQ (299 aa). A helical membrane pass occupies residues 1348–1365; that stretch reads FDISIMILICLNMVTMMV. At 1366–1376 the chain is on the extracellular side; the sequence is ETDDQSQLKVD. The helical transmembrane segment at 1377-1395 threads the bilayer; it reads ILYNINMVFIIIFTGECVL. The Cytoplasmic segment spans residues 1396–1407; sequence KMFALRHYYFTI. A helical transmembrane segment spans residues 1408–1425; the sequence is GWNIFDFVVVILSIVGLA. Topologically, residues 1426–1438 are extracellular; the sequence is LSDLIQKYFVSPT. A helical transmembrane segment spans residues 1439–1455; the sequence is LFRVIRLARIGRVLRLI. Residues 1456-1474 are Cytoplasmic-facing; that stretch reads RGAKGIRTLLFALMMSLPA. Residues 1475–1492 traverse the membrane as a helical segment; it reads LFNIGLLLFLVMFIYSIF. The Extracellular segment spans residues 1493 to 1514; sequence GMSNFAYVKKESGIDDMFNFET. The pore-forming intramembrane region spans 1515-1537; it reads FGNSIICLFEITTSAGWDGLLNP. Topologically, residues 1538–1567 are extracellular; sequence ILNSGPPDCDPTLENPGTNVRGDCGNPSIG. Cys1546 and Cys1561 form a disulfide bridge. Residues 1568–1590 traverse the membrane as a helical segment; it reads ICFFCSYIIISFLIVVNMYIAII. Topologically, residues 1591 to 1840 are cytoplasmic; sequence LENFNVATEE…VRPGVKESLV (250 aa). One can recognise an IQ domain in the interval 1720 to 1749; sequence EEVCAIKIQRAYRRHLLQRSVKQASYMYRH. The disordered stretch occupies residues 1775-1840; sequence HEKEGDGVQS…VRPGVKESLV (66 aa). Residues 1804–1813 are compositionally biased toward low complexity; sequence PTSSSDTALT. Pro residues predominate over residues 1814 to 1824; sequence PSPPPLPPSSS.

It belongs to the sodium channel (TC 1.A.1.10) family. Nav1.4/SCN4A subfamily. The Nav1.4 voltage-gated sodium channel consists of an ion-conducting alpha subunit SCN4A which is functional on its own and a regulatory beta subunit SCN1B. SCN1B strongly enhances the presence of SCN4A at the cell surface. SCN1B is also required for rapid channel inactivation and recovery after inactivation. It prevents the decrease of channel activity in response to repetitive, high-frequency depolarizations. Interacts with the syntrophins SNTA1, SNTB1 and SNTB2 (via PDZ domain); probably links SCN4A to the actin cytoskeleton and the extracellular matrix via the dystrophin-associated protein complex and regulates its localization in muscle cells. Interacts with TMEM233; probable regulator of the channel. Detected in skeletal muscle.

The protein resides in the cell membrane. The enzyme catalyses Na(+)(in) = Na(+)(out). With respect to regulation, potently inhibited by tetrodotoxin and saxitoxin. Inhibited by the conotoxin GVIIJ. In terms of biological role, pore-forming subunit of Nav1.4, a voltage-gated sodium (Nav) channel that directly mediates the depolarizing phase of action potentials in excitable membranes. Navs, also called VGSCs (voltage-gated sodium channels) or VDSCs (voltage-dependent sodium channels), operate by switching between closed and open conformations depending on the voltage difference across the membrane. In the open conformation they allow Na(+) ions to selectively pass through the pore, along their electrochemical gradient. The influx of Na+ ions provokes membrane depolarization, initiating the propagation of electrical signals throughout cells and tissues. Highly expressed in skeletal muscles, Nav1.4 generates the action potential crucial for muscle contraction. The sequence is that of Sodium channel protein type 4 subunit alpha from Rattus norvegicus (Rat).